A 160-amino-acid polypeptide reads, in one-letter code: Small ribosomal subunit protein uS7 (160 aa).

This sequence belongs to the universal ribosomal protein uS7 family. In terms of assembly, part of the 30S ribosomal subunit. Contacts proteins S9 and S11.

Functionally, one of the primary rRNA binding proteins, it binds directly to 16S rRNA where it nucleates assembly of the head domain of the 30S subunit. Is located at the subunit interface close to the decoding center, probably blocks exit of the E-site tRNA. This Rickettsia akari (strain Hartford) protein is Small ribosomal subunit protein uS7.